The chain runs to 573 residues: MRASELLAPTLRETPAEAEIVSHQLLLRGGFIRKAAAGIYTYLPLGRRVLAKIEQIIREEMDRAGGQEVVLPIIQPAELWQESGRWEVYGEEMFRLQDRHRRQFCLGPTHEEIITALVRSEVTSYKQLPLLLYQIQNKYRDERRPRFGLLRGREFIMKDLYSFDLDQEGLNQSYRKMYQAYSNVFRRCGLDFRPVQADSGAIGGNYSHEFMALATAGEALLVYCRECDYAANVEIAVAKALPMIATENPAPLKEVATPGQKTVAEICTFLEVTPDRLIKTLFYEADGQLIAALVRGDRELNEVKLQNHLGCRHLLLADPERVRKATGAPVGFVGPVGLQGIPLYADLEIPYLVNGVAGANREGYHLVNVNPGRDFNPTAVVDIRQVEAGEPCPQCGAPLAQARGIEVGQVFQLGTKYSGALGANYTDARGQEHPIVMGCYGIGVSRTMAAIVEQCHDDQGIIWPLSVAPYQVVIIPASLKDDGQRQVAEGLYRELAAAGVEVVYDDRDERAGLKFVEADLIGYPLRITVGKRTITSGTVDVKWRSRKEETPLPLEGLSAQIQALLAREMEKYR.

It belongs to the class-II aminoacyl-tRNA synthetase family. ProS type 1 subfamily. As to quaternary structure, homodimer.

It is found in the cytoplasm. The enzyme catalyses tRNA(Pro) + L-proline + ATP = L-prolyl-tRNA(Pro) + AMP + diphosphate. Catalyzes the attachment of proline to tRNA(Pro) in a two-step reaction: proline is first activated by ATP to form Pro-AMP and then transferred to the acceptor end of tRNA(Pro). As ProRS can inadvertently accommodate and process non-cognate amino acids such as alanine and cysteine, to avoid such errors it has two additional distinct editing activities against alanine. One activity is designated as 'pretransfer' editing and involves the tRNA(Pro)-independent hydrolysis of activated Ala-AMP. The other activity is designated 'posttransfer' editing and involves deacylation of mischarged Ala-tRNA(Pro). The misacylated Cys-tRNA(Pro) is not edited by ProRS. This chain is Proline--tRNA ligase, found in Moorella thermoacetica (strain ATCC 39073 / JCM 9320).